We begin with the raw amino-acid sequence, 250 residues long: Sulfate transporter CysZ (250 aa).

The next 4 helical transmembrane spans lie at 27–47, 64–84, 150–170, and 210–230; these read FVVLPLLANIILVGGAMYYLF, FLSWLSYVLWPLLALTILATF, FLLLLIPALGQTLGPIAWFLF, and MLVAFFTSIPIVNLFIVPVAV.

Belongs to the CysZ family.

The protein localises to the cell inner membrane. Functionally, high affinity, high specificity proton-dependent sulfate transporter, which mediates sulfate uptake. Provides the sulfur source for the cysteine synthesis pathway. This chain is Sulfate transporter CysZ, found in Vibrio cholerae serotype O1 (strain ATCC 39315 / El Tor Inaba N16961).